A 746-amino-acid chain; its full sequence is Exostosin-1 (746 aa).

The Cytoplasmic portion of the chain corresponds to 1-7 (MQAKKRY). The chain crosses the membrane as a helical; Signal-anchor for type II membrane protein span at residues 8-28 (FILLSAGSCLALLFYFGGLQF). Residues 29–746 (RASRSHSRRE…RKKYRDIERL (718 aa)) are Lumenal-facing. N-linked (GlcNAc...) asparagine glycosylation is present at Asn89. Disulfide bonds link Cys98-Cys103 and Cys109-Cys152. Leu166 and Tyr203 together coordinate a protein. The UDP site is built by Lys267, Lys269, Tyr271, and Arg280. Residues Cys298 and Cys312 are joined by a disulfide bond. A protein is bound at residue His300. Tyr319 and Tyr324 together coordinate UDP. Asn330 carries N-linked (GlcNAc...) asparagine glycosylation. 2 disulfides stabilise this stretch: Cys334/Cys355 and Cys652/Cys704. UDP contacts are provided by Arg346 and Glu349.

Belongs to the glycosyltransferase 47 family. Part of the heparan sulfate polymerase, a dimeric complex composed of EXT1 and EXT2. Could also form homooligomeric complexes. Interacts with NDST1. In terms of processing, N-glycosylated.

The protein localises to the golgi apparatus membrane. Its subcellular location is the golgi apparatus. It localises to the cis-Golgi network membrane. It is found in the endoplasmic reticulum membrane. It catalyses the reaction 3-O-{alpha-D-GlcNAc-[(1-&gt;4)-beta-D-GlcA-(1-&gt;4)-alpha-D-GlcNAc](n)-(1-&gt;4)-beta-D-GlcA-(1-&gt;3)-beta-D-Gal-(1-&gt;3)-beta-D-Gal-(1-&gt;4)-beta-D-Xyl}-L-seryl-[protein] + UDP-alpha-D-glucuronate = 3-O-{[(1-&gt;4)-beta-D-GlcA-(1-&gt;4)-alpha-D-GlcNAc](n+1)-(1-&gt;4)-beta-D-GlcA-(1-&gt;3)-beta-D-Gal-(1-&gt;3)-beta-D-Gal-(1-&gt;4)-beta-D-Xyl}-L-seryl-[protein] + UDP + H(+). The protein operates within protein modification; protein glycosylation. Glycosyltransferase forming with EXT2 the heterodimeric heparan sulfate polymerase which catalyzes the elongation of the heparan sulfate glycan backbone. Glycan backbone extension consists in the alternating transfer of (1-&gt;4)-beta-D-GlcA and (1-&gt;4)-alpha-D-GlcNAc residues from their respective UDP-sugar donors. Both EXT1 and EXT2 are required for the full activity of the polymerase since EXT1 bears the N-acetylglucosaminyl-proteoglycan 4-beta-glucuronosyltransferase activity within the complex while EXT2 carries the glucuronosyl-N-acetylglucosaminyl-proteoglycan 4-alpha-N-acetylglucosaminyltransferase activity. Heparan sulfate proteoglycans are ubiquitous components of the extracellular matrix and play an important role in tissue homeostasis and signaling. The chain is Exostosin-1 (EXT1) from Papio anubis (Olive baboon).